Reading from the N-terminus, the 512-residue chain is Probable malate:quinone oxidoreductase (512 aa).

This sequence belongs to the MQO family. It depends on FAD as a cofactor.

The catalysed reaction is (S)-malate + a quinone = a quinol + oxaloacetate. The protein operates within carbohydrate metabolism; tricarboxylic acid cycle; oxaloacetate from (S)-malate (quinone route): step 1/1. This chain is Probable malate:quinone oxidoreductase, found in Bradyrhizobium diazoefficiens (strain JCM 10833 / BCRC 13528 / IAM 13628 / NBRC 14792 / USDA 110).